A 410-amino-acid polypeptide reads, in one-letter code: Magnesium transporter NIPA3 (410 aa).

Topologically, residues Met1–Ser67 are extracellular. N-linked (GlcNAc...) asparagine glycans are attached at residues Asn25, Asn35, and Asn50. The helical transmembrane segment at Leu68 to Leu88 threads the bilayer. At Lys89–Glu114 the chain is on the cytoplasmic side. Residues Trp115–Tyr135 traverse the membrane as a helical segment. Residue Ala136 is a topological domain, extracellular. The helical transmembrane segment at Phe137–Leu157 threads the bilayer. Residues Ser158–His165 are Cytoplasmic-facing. The chain crosses the membrane as a helical span at residues Leu166–Ile186. At His187–Pro207 the chain is on the extracellular side. The helical transmembrane segment at Gly208–Ala228 threads the bilayer. The Cytoplasmic portion of the chain corresponds to Pro229–Gln233. Residues Thr234–Val254 traverse the membrane as a helical segment. Residues Lys255–His273 lie on the Extracellular side of the membrane. The helical transmembrane segment at Pro274–Leu294 threads the bilayer. The Cytoplasmic portion of the chain corresponds to Asn295–Ser304. The helical transmembrane segment at Ile305–Leu325 threads the bilayer. Over Phe326–Asp336 the chain is Extracellular. Residues Ile337–Phe357 form a helical membrane-spanning segment. The Cytoplasmic portion of the chain corresponds to Lys358 to Asp410.

The protein belongs to the NIPA family.

The protein localises to the golgi apparatus membrane. It carries out the reaction Mg(2+)(in) = Mg(2+)(out). Its function is as follows. Acts as a Mg(2+) transporter. Can also transport other divalent cations such as Fe(2+), Sr(2+), Ba(2+), Mn(2+), Cu(2+) and Co(2+) but to a much less extent than Mg(2+). The chain is Magnesium transporter NIPA3 (NIPAL1) from Pongo abelii (Sumatran orangutan).